Here is a 21-residue protein sequence, read N- to C-terminus: Ferredoxin (21 aa).

In terms of domain architecture, 4Fe-4S ferredoxin-type spans 2–21 (KVKVDADACIGCGVCVELCP). [4Fe-4S] cluster contacts are provided by Cys10, Cys13, and Cys16.

Monomer. The cofactor is [4Fe-4S] cluster.

Ferredoxins are iron-sulfur proteins that transfer electrons in a wide variety of metabolic reactions. This chain is Ferredoxin (fdxA), found in Pyrococcus woesei.